Here is a 133-residue protein sequence, read N- to C-terminus: uncharacterized protein (133 aa).

A signal peptide spans 1–22 (MYRSSISIQVFICVLFLPLDSG). Asn111 carries N-linked (GlcNAc...) asparagine glycosylation.

The protein localises to the secreted. This is an uncharacterized protein from Saccharomyces cerevisiae (strain ATCC 204508 / S288c) (Baker's yeast).